The following is a 527-amino-acid chain: Berberine bridge enzyme-like 5 (527 aa).

The first 19 residues, Met-1–Ala-19, serve as a signal peptide directing secretion. A disulfide bridge connects residues Cys-32 and Cys-95. Asn-35 and Asn-52 each carry an N-linked (GlcNAc...) asparagine glycan. Residues Asn-73–Val-247 form the FAD-binding PCMH-type domain. Residues His-110–Cys-172 constitute a cross-link (6-(S-cysteinyl)-8alpha-(pros-histidyl)-FAD (His-Cys)). An N-linked (GlcNAc...) asparagine glycan is attached at Asn-341.

The protein belongs to the oxygen-dependent FAD-linked oxidoreductase family. Requires FAD as cofactor. In terms of processing, the FAD cofactor is bound via a bicovalent 6-S-cysteinyl, 8alpha-N1-histidyl FAD linkage.

It is found in the secreted. It localises to the cell wall. Functionally, probable flavin-dependent oxidoreductase. The sequence is that of Berberine bridge enzyme-like 5 from Arabidopsis thaliana (Mouse-ear cress).